We begin with the raw amino-acid sequence, 407 residues long: uncharacterized protein (407 aa).

This is an uncharacterized protein from Mycobacterium tuberculosis (strain CDC 1551 / Oshkosh).